The chain runs to 129 residues: Lysozyme C (129 aa).

Positions K1–L129 constitute a C-type lysozyme domain. 4 cysteine pairs are disulfide-bonded: C6–C127, C30–C115, C64–C80, and C76–C94. Active-site residues include E35 and D52.

It belongs to the glycosyl hydrolase 22 family. As to quaternary structure, monomer.

Its subcellular location is the secreted. It catalyses the reaction Hydrolysis of (1-&gt;4)-beta-linkages between N-acetylmuramic acid and N-acetyl-D-glucosamine residues in a peptidoglycan and between N-acetyl-D-glucosamine residues in chitodextrins.. In terms of biological role, lysozymes have primarily a bacteriolytic function; those in tissues and body fluids are associated with the monocyte-macrophage system and enhance the activity of immunoagents. The polypeptide is Lysozyme C (LYZ) (Lophophorus impejanus (Himalayan monal pheasant)).